A 423-amino-acid chain; its full sequence is Glutamine synthetase, chloroplastic (423 aa).

Residues 1–51 (MAQAVVPAMQCRVGVKAAAGRVWSAGRTRTGRGGASPGFKVMAVSTGSTGV) constitute a chloroplast transit peptide. In terms of domain architecture, GS beta-grasp spans 70–150 (VIAEYIWVGG…VICDTYTPQG (81 aa)). The segment at 89 to 115 (RTISKPVEDPSELPKWNYDGSSTGQAP) is disordered. The GS catalytic domain maps to 154–423 (PTNKRHRAAQ…LAAKKLALKV (270 aa)).

Belongs to the glutamine synthetase family. Homooctamer.

The protein resides in the plastid. The protein localises to the chloroplast. It catalyses the reaction L-glutamate + NH4(+) + ATP = L-glutamine + ADP + phosphate + H(+). Functionally, the light-modulated chloroplast enzyme, encoded by a nuclear gene and expressed primarily in leaves, is responsible for the reassimilation of the ammonia generated by photorespiration. In Zea mays (Maize), this protein is Glutamine synthetase, chloroplastic (GLN2).